Here is a 376-residue protein sequence, read N- to C-terminus: Methylthioribose-1-phosphate isomerase (376 aa).

Residue Asp-256 is the Proton donor of the active site.

It belongs to the eIF-2B alpha/beta/delta subunits family. MtnA subfamily.

It localises to the cytoplasm. The protein resides in the nucleus. It carries out the reaction 5-(methylsulfanyl)-alpha-D-ribose 1-phosphate = 5-(methylsulfanyl)-D-ribulose 1-phosphate. It functions in the pathway amino-acid biosynthesis; L-methionine biosynthesis via salvage pathway; L-methionine from S-methyl-5-thio-alpha-D-ribose 1-phosphate: step 1/6. Functionally, catalyzes the interconversion of methylthioribose-1-phosphate (MTR-1-P) into methylthioribulose-1-phosphate (MTRu-1-P). In Vitis vinifera (Grape), this protein is Methylthioribose-1-phosphate isomerase.